The sequence spans 434 residues: 3-phosphoshikimate 1-carboxyvinyltransferase (434 aa).

3-phosphoshikimate contacts are provided by K22, S23, and R27. K22 provides a ligand contact to phosphoenolpyruvate. Residues G93 and R121 each coordinate phosphoenolpyruvate. Residues S168, S169, Q170, S199, D320, and K347 each contribute to the 3-phosphoshikimate site. A phosphoenolpyruvate-binding site is contributed by Q170. Catalysis depends on D320, which acts as the Proton acceptor. Phosphoenolpyruvate contacts are provided by R351, R394, and K419.

This sequence belongs to the EPSP synthase family. Monomer.

Its subcellular location is the cytoplasm. It catalyses the reaction 3-phosphoshikimate + phosphoenolpyruvate = 5-O-(1-carboxyvinyl)-3-phosphoshikimate + phosphate. It functions in the pathway metabolic intermediate biosynthesis; chorismate biosynthesis; chorismate from D-erythrose 4-phosphate and phosphoenolpyruvate: step 6/7. Its function is as follows. Catalyzes the transfer of the enolpyruvyl moiety of phosphoenolpyruvate (PEP) to the 5-hydroxyl of shikimate-3-phosphate (S3P) to produce enolpyruvyl shikimate-3-phosphate and inorganic phosphate. The polypeptide is 3-phosphoshikimate 1-carboxyvinyltransferase (Burkholderia vietnamiensis (strain G4 / LMG 22486) (Burkholderia cepacia (strain R1808))).